The primary structure comprises 163 residues: Putative pre-16S rRNA nuclease (163 aa).

Belongs to the YqgF nuclease family.

The protein resides in the cytoplasm. Functionally, could be a nuclease involved in processing of the 5'-end of pre-16S rRNA. The sequence is that of Putative pre-16S rRNA nuclease from Chlamydia caviae (strain ATCC VR-813 / DSM 19441 / 03DC25 / GPIC) (Chlamydophila caviae).